We begin with the raw amino-acid sequence, 450 residues long: Probable ECA polymerase (450 aa).

The next 11 helical transmembrane spans lie at 6–26 (FSGLFVVWLLCTLFIATLTWF), 37–57 (VFFSLLFLLTFFFGFPLTSVL), 63–83 (VGVAPPEILLQVLLSAGCFYA), 118–138 (VILMGIALVSVGIFFMHNGFL), 155–175 (GVALKRFFYFFIPAMLVVYFL), 181–201 (AWLFFLVSTVAFGLLTYMIVG), 207–227 (IIIAFAIFLFIGIIRGWISLW), 228–248 (MLAAAGVLGIVGMFWLALKRY), 341–361 (LVVMGGALFIPLGAIVVGLII), 378–398 (YKAAILHSFCFGAIFNMIVLA), and 410–430 (VFFIVVFGACLMIAKLLYWLF).

This sequence belongs to the WzyE family. As to quaternary structure, probably part of a complex composed of WzxE, WzyE and WzzE.

Its subcellular location is the cell inner membrane. It functions in the pathway bacterial outer membrane biogenesis; enterobacterial common antigen biosynthesis. In terms of biological role, probably involved in the polymerization of enterobacterial common antigen (ECA) trisaccharide repeat units. The chain is Probable ECA polymerase from Shigella flexneri.